Consider the following 784-residue polypeptide: Receptor-like protein 38 (784 aa).

Residues 1–30 (MIRSQSYCFLGITITIYFFFCLLPLPNTFA) form the signal peptide. Residues 31 to 752 (SPPTQSLCRH…SELEEPVLNW (722 aa)) are Extracellular-facing. LRR repeat units lie at residues 109 to 133 (LQHLTHLDLSNCNLQGEIPSSIENL), 134 to 157 (SHLTHLDLSTNHLVGEVPASIGNL), 158 to 180 (NQLEYIDLRGNHLRGNIPTSFAN), 182 to 204 (TKLSLLDLHENNFTGGDIVLSNL), and 205 to 227 (TSLAILDLSSNHFKSFFSADLSG). N-linked (GlcNAc...) asparagine glycosylation is present at N132. N-linked (GlcNAc...) asparagine glycosylation is found at N180, N193, and N203. The stretch at 228–251 (LHNLEQIFGNENSFVGLFPASLLK) is one LRR 6; degenerate repeat. 10 LRR repeats span residues 252-276 (ISSLDKIQLSQNQFEGPIDFGNTSS), 278-301 (SRLTMLDISHNNFIGRVPSSLSKL), 302-324 (VNLELLDLSHNNFRGLSPRSISK), 326-349 (VNLTSLDISYNKLEGQVPYFIWKP), 351-373 (NLQSVDLSHNSFFDLGKSVEVVN), 374-400 (GAKLVGLNLGSNSLQGPIPQWICNFRF), 402-422 (FFLDLSDNRFTGSIPQCLKNS), 423-446 (TDFNTLNLRNNSLSGFLPELCMDS), 447-470 (TMLRSLDVSYNNFVGKLPKSLMNC), and 472-496 (DMEFLNVRGNKIKDTFPFWLGSRKS). Residue N273 is glycosylated (N-linked (GlcNAc...) asparagine). N327 is a glycosylation site (N-linked (GlcNAc...) asparagine). N421 and N432 each carry an N-linked (GlcNAc...) asparagine glycan. The stretch at 497–518 (LMVLVLRSNAFYGPVYNSTTYL) is one LRR 17; degenerate repeat. N513, N544, and N562 each carry an N-linked (GlcNAc...) asparagine glycan. One copy of the LRR 18 repeat lies at 520–544 (FPRLSIIDISNNDFVGSLPQDYFAN). 4 LRR repeats span residues 608–632 (FRGFKVIDFSGNRFSGHIPRSIGLL), 633–656 (SELLHLNLSGNAFTGNIPPSLANI), 657–680 (TNLETLDLSRNNLSGEIPRSLGNL), and 682–705 (FLSNINFSHNHLQGFVPRSTQFGT). N-linked (GlcNAc...) asparagine glycans are attached at residues N639, N655, N668, N679, N687, and N707. Residues 753–773 (IAAAIAFGPGVFCGFVIGHIF) traverse the membrane as a helical segment. Residues 774–784 (TSYKHLWFIAR) lie on the Cytoplasmic side of the membrane.

This sequence belongs to the RLP family.

The protein resides in the cell membrane. The chain is Receptor-like protein 38 from Arabidopsis thaliana (Mouse-ear cress).